The primary structure comprises 169 residues: Cell division inhibitor SulA (169 aa).

Over residues Met1–Ala15 the composition is skewed to polar residues. The interval Met1 to His22 is disordered. The interval Ala106–Tyr112 is ftsZ binding. The segment at Lys162–His169 is lon protease binding.

This sequence belongs to the SulA family. Interacts with FtsZ. Post-translationally, is rapidly cleaved and degraded by the Lon protease once DNA damage is repaired.

Component of the SOS system and an inhibitor of cell division. Accumulation of SulA causes rapid cessation of cell division and the appearance of long, non-septate filaments. In the presence of GTP, binds a polymerization-competent form of FtsZ in a 1:1 ratio, thus inhibiting FtsZ polymerization and therefore preventing it from participating in the assembly of the Z ring. This mechanism prevents the premature segregation of damaged DNA to daughter cells during cell division. The sequence is that of Cell division inhibitor SulA from Klebsiella pneumoniae (strain 342).